Reading from the N-terminus, the 673-residue chain is UvrABC system protein B (673 aa).

One can recognise a Helicase ATP-binding domain in the interval glutamate 24–arginine 182. Residue glycine 37–threonine 44 participates in ATP binding. A Beta-hairpin motif is present at residues tyrosine 90–isoleucine 113. One can recognise a Helicase C-terminal domain in the interval glutamine 429 to lysine 591. One can recognise a UVR domain in the interval threonine 634–isoleucine 669.

The protein belongs to the UvrB family. In terms of assembly, forms a heterotetramer with UvrA during the search for lesions. Interacts with UvrC in an incision complex.

It is found in the cytoplasm. In terms of biological role, the UvrABC repair system catalyzes the recognition and processing of DNA lesions. A damage recognition complex composed of 2 UvrA and 2 UvrB subunits scans DNA for abnormalities. Upon binding of the UvrA(2)B(2) complex to a putative damaged site, the DNA wraps around one UvrB monomer. DNA wrap is dependent on ATP binding by UvrB and probably causes local melting of the DNA helix, facilitating insertion of UvrB beta-hairpin between the DNA strands. Then UvrB probes one DNA strand for the presence of a lesion. If a lesion is found the UvrA subunits dissociate and the UvrB-DNA preincision complex is formed. This complex is subsequently bound by UvrC and the second UvrB is released. If no lesion is found, the DNA wraps around the other UvrB subunit that will check the other stand for damage. The sequence is that of UvrABC system protein B from Cytophaga hutchinsonii (strain ATCC 33406 / DSM 1761 / CIP 103989 / NBRC 15051 / NCIMB 9469 / D465).